We begin with the raw amino-acid sequence, 223 residues long: MEPDFWHSKWNAEQIGFHLNEVNPLLIKYWPALDLAPNSQVFVPLCGKSLDLCYLAELGHKVVGCELNQTAVEQFFAENSLPHLMTPAKESISELNRFDASDITLYQGDLFSLTPEELSGVDAFYDRAALIAWPESMRLAYVEKLIELLPPKSMGLLVTLDYPQEALKGPPFAVSNDWVMANMADYFELELLSSEDVLNENPRFVNKQVPWLTESVYQLKRRG.

The S-adenosyl-L-methionine site is built by Trp10, Leu45, Glu66, and Arg127.

The protein belongs to the class I-like SAM-binding methyltransferase superfamily. TPMT family.

The protein resides in the cytoplasm. The catalysed reaction is S-adenosyl-L-methionine + a thiopurine = S-adenosyl-L-homocysteine + a thiopurine S-methylether.. The polypeptide is Thiopurine S-methyltransferase (Shewanella woodyi (strain ATCC 51908 / MS32)).